Consider the following 383-residue polypeptide: MTASSPSLSPTLELACELIRRPSVTPLDADCQALMMRRLEAAGFALEPMRIEEVDNFWARRGGDGPVLCFAGHTDVVPTGPLQAWQHQPFDALIDDQGMLCGRGAADMKGSLASMIVAVERFVADHPEHKGAIAFLITSDEEGPAHHGTKAVVERLAARGERLDWCIVGEPSSTSLVGDVVKNGRRGSLGAKLTIRGVQGHVAYPHLAKNPIHLAAPALAELAAEHWDDGNAFFPPTSFQVSNLNSGTGATNVIPGELTALFNFRFSTESTVEGLQKRVEAILDKHGLDWHVEWALSGLPFLTEPGELLDAVAASIRAVTGRETQPSTSGGTSDGRFIATMGTQVVELGPVNATIHQVNERVLASDLELLTEIYYQTLVRLLA.

His73 is a Zn(2+) binding site. Asp75 is an active-site residue. Zn(2+) is bound at residue Asp107. The active-site Proton acceptor is the Glu141. Zn(2+)-binding residues include Glu142, Glu170, and His356.

Belongs to the peptidase M20A family. DapE subfamily. As to quaternary structure, homodimer. The cofactor is Zn(2+). It depends on Co(2+) as a cofactor.

The catalysed reaction is N-succinyl-(2S,6S)-2,6-diaminopimelate + H2O = (2S,6S)-2,6-diaminopimelate + succinate. It functions in the pathway amino-acid biosynthesis; L-lysine biosynthesis via DAP pathway; LL-2,6-diaminopimelate from (S)-tetrahydrodipicolinate (succinylase route): step 3/3. Functionally, catalyzes the hydrolysis of N-succinyl-L,L-diaminopimelic acid (SDAP), forming succinate and LL-2,6-diaminopimelate (DAP), an intermediate involved in the bacterial biosynthesis of lysine and meso-diaminopimelic acid, an essential component of bacterial cell walls. This Pseudomonas aeruginosa (strain ATCC 15692 / DSM 22644 / CIP 104116 / JCM 14847 / LMG 12228 / 1C / PRS 101 / PAO1) protein is Succinyl-diaminopimelate desuccinylase.